Reading from the N-terminus, the 1775-residue chain is Protein TIC 214 (1775 aa).

Helical transmembrane passes span 19 to 39 (IINS…FSIG), 68 to 88 (FIAG…HLAL), 91 to 111 (PHTI…WNNH), 133 to 153 (VFLN…SSML), 176 to 196 (VGWL…LVWI), and 227 to 247 (IFSI…PSPI). Positions 1491–1512 (KESAGQGERESDNEKKKNLESA) are disordered.

Belongs to the TIC214 family. In terms of assembly, part of the Tic complex.

The protein localises to the plastid. It is found in the chloroplast inner membrane. Its function is as follows. Involved in protein precursor import into chloroplasts. May be part of an intermediate translocation complex acting as a protein-conducting channel at the inner envelope. The chain is Protein TIC 214 from Lobularia maritima (Sweet alyssum).